The following is a 145-amino-acid chain: Large ribosomal subunit protein uL15 (145 aa).

The tract at residues 1–58 (MKLHELSPSEGSRKKRKRVGRGPGSGMGGTSTRGNKGHNQRSGGGTRPGFEGGQMPLH) is disordered. Gly residues-rich tracts occupy residues 21–31 (RGPGSGMGGTS) and 42–52 (SGGGTRPGFEG).

The protein belongs to the universal ribosomal protein uL15 family. As to quaternary structure, part of the 50S ribosomal subunit.

Binds to the 23S rRNA. This Desulforapulum autotrophicum (strain ATCC 43914 / DSM 3382 / VKM B-1955 / HRM2) (Desulfobacterium autotrophicum) protein is Large ribosomal subunit protein uL15.